Reading from the N-terminus, the 303-residue chain is Polyisoprenyl-teichoic acid--peptidoglycan teichoic acid transferase TagU (303 aa).

At 1-4 the chain is on the cytoplasmic side; that stretch reads MKKK. A helical; Signal-anchor for type II membrane protein membrane pass occupies residues 5-25; it reads ILFWVLGILGVLIIGGGIYAY. The Extracellular portion of the chain corresponds to 26–303; that stretch reads NVYSSVSNTL…KLRTHLEVTK (278 aa).

Belongs to the LytR/CpsA/Psr (LCP) family.

It is found in the cell membrane. Its pathway is cell wall biogenesis. In terms of biological role, may catalyze the final step in cell wall teichoic acid biosynthesis, the transfer of the anionic cell wall polymers (APs) from their lipid-linked precursor to the cell wall peptidoglycan (PG). This chain is Polyisoprenyl-teichoic acid--peptidoglycan teichoic acid transferase TagU, found in Bacillus cereus (strain ZK / E33L).